The sequence spans 364 residues: SVP1-like protein 2 (364 aa).

2 WD repeats span residues A173–E213 and Y218–R257.

This sequence belongs to the WD repeat PROPPIN family.

Its subcellular location is the vacuole membrane. The protein localises to the cytoplasmic vesicle membrane. It localises to the preautophagosomal structure membrane. Its function is as follows. Involved in mitochondrial or peroxisomal functions and amino acid signaling pathways. This Schizosaccharomyces pombe (strain 972 / ATCC 24843) (Fission yeast) protein is SVP1-like protein 2 (hsv2).